Reading from the N-terminus, the 246-residue chain is UL16-binding protein 2 (246 aa).

The first 25 residues, 1 to 25 (MAAAAATKILLCLPLLLLLSGWSRA), serve as a signal peptide directing secretion. The segment at 29 to 117 (DPHSLCYDIT…IQLENYTPKE (89 aa)) is MHC class I alpha-1 like. A disulfide bridge connects residues C50 and C66. N-linked (GlcNAc...) asparagine glycans are attached at residues N68 and N82. Positions 118-210 (PLTLQARMSC…MDSTLEPSAG (93 aa)) are MHC class I alpha-2 like. C127 and C190 are disulfide-bonded. S216 lines the a protein pocket. The GPI-anchor amidated serine moiety is linked to residue S217. The propeptide at 218–246 (GTTQLRATATTLILCCLLIILPCFILPGI) is removed in mature form.

This sequence belongs to the MHC class I family. In terms of assembly, interacts with KLRK1/NKG2D. Does not bind to beta2-microglobulin. (Microbial infection) In CMV-infected cells, interacts with the viral glycoprotein UL16; this interaction causes ULBP2 retention in the endoplasmic reticulum and cis-Golgi and prevents binding to and activation of KLRK1/NKG2D, providing CMV with an immune evasion mechanism. As to expression, expressed in various types of cancer cell lines and in the fetus, but not in normal tissues.

The protein resides in the cell membrane. It is found in the endoplasmic reticulum. The protein localises to the secreted. Its function is as follows. Binds and activates the KLRK1/NKG2D receptor, mediating natural killer cell cytotoxicity. The protein is UL16-binding protein 2 of Homo sapiens (Human).